We begin with the raw amino-acid sequence, 363 residues long: Chorismate synthase (363 aa).

Arg-48 contacts NADP(+). Residues 125–127 (RSS), 238–239 (NA), Gly-278, 293–297 (KPTAS), and Arg-319 contribute to the FMN site.

The protein belongs to the chorismate synthase family. Homotetramer. It depends on FMNH2 as a cofactor.

The enzyme catalyses 5-O-(1-carboxyvinyl)-3-phosphoshikimate = chorismate + phosphate. It participates in metabolic intermediate biosynthesis; chorismate biosynthesis; chorismate from D-erythrose 4-phosphate and phosphoenolpyruvate: step 7/7. Its function is as follows. Catalyzes the anti-1,4-elimination of the C-3 phosphate and the C-6 proR hydrogen from 5-enolpyruvylshikimate-3-phosphate (EPSP) to yield chorismate, which is the branch point compound that serves as the starting substrate for the three terminal pathways of aromatic amino acid biosynthesis. This reaction introduces a second double bond into the aromatic ring system. This is Chorismate synthase from Acinetobacter baumannii (strain AB0057).